The primary structure comprises 316 residues: Ribosomal RNA small subunit methyltransferase H (316 aa).

Residues 35–37, aspartate 55, phenylalanine 84, aspartate 105, and glutamine 112 contribute to the S-adenosyl-L-methionine site; that span reads AGH.

It belongs to the methyltransferase superfamily. RsmH family.

Its subcellular location is the cytoplasm. It catalyses the reaction cytidine(1402) in 16S rRNA + S-adenosyl-L-methionine = N(4)-methylcytidine(1402) in 16S rRNA + S-adenosyl-L-homocysteine + H(+). In terms of biological role, specifically methylates the N4 position of cytidine in position 1402 (C1402) of 16S rRNA. This is Ribosomal RNA small subunit methyltransferase H from Streptococcus pneumoniae (strain P1031).